The following is a 122-amino-acid chain: Large ribosomal subunit protein bL12 (122 aa).

Belongs to the bacterial ribosomal protein bL12 family. In terms of assembly, homodimer. Part of the ribosomal stalk of the 50S ribosomal subunit. Forms a multimeric L10(L12)X complex, where L10 forms an elongated spine to which 2 to 4 L12 dimers bind in a sequential fashion. Binds GTP-bound translation factors.

Functionally, forms part of the ribosomal stalk which helps the ribosome interact with GTP-bound translation factors. Is thus essential for accurate translation. The protein is Large ribosomal subunit protein bL12 of Streptococcus sanguinis (strain SK36).